The chain runs to 413 residues: MSDFIFTSESVTEGHPDKICDQISDAVLDALLTEDPESRVACETVVNTGLCLLTGEITSKAKVDYIKLVRNVIKEIGYEGYKAGGFDANSCAVLVALDEQSPDISQGVNEADDVNDDLEDNTGAGDQGIMFGYACDETPELMPLPISLAHRLAIQLAKVRHENLLNYLLPDGKTQVSIDYEKGLPVSINTILISTQHNPEIDGLTNEEEIRQRIKEDLWKHVVIPATEDLEIKPNIIKTRFLVNPTGKFVVGGPQGDAGLTGRKIIVDTYGGYARHGGGAFSGKDPTKVDRSAAYAARYVAKSIVKAKLAKKAEVQLSYAIGVAKPISILVDTFDTGVISQANLTELIKKYFDLRPAAIIKEFDLRNLPQKMGGKFFRKTASYGHFGRRDLDLPWEKVEEKAAQLAEASKVFL.

Residue H15 participates in ATP binding. Mg(2+) is bound at residue D17. E43 serves as a coordination point for K(+). Residues E56 and Q100 each contribute to the L-methionine site. Residues 100–110 are flexible loop; it reads QSPDISQGVNE. Residues 171–173, 248–249, D257, 263–264, A280, and K284 each bind ATP; these read DGK, KF, and RK. D257 is a binding site for L-methionine. K288 is an L-methionine binding site.

The protein belongs to the AdoMet synthase family. Homotetramer; dimer of dimers. Requires Mg(2+) as cofactor. The cofactor is K(+).

The protein localises to the cytoplasm. It carries out the reaction L-methionine + ATP + H2O = S-adenosyl-L-methionine + phosphate + diphosphate. The protein operates within amino-acid biosynthesis; S-adenosyl-L-methionine biosynthesis; S-adenosyl-L-methionine from L-methionine: step 1/1. Functionally, catalyzes the formation of S-adenosylmethionine (AdoMet) from methionine and ATP. The overall synthetic reaction is composed of two sequential steps, AdoMet formation and the subsequent tripolyphosphate hydrolysis which occurs prior to release of AdoMet from the enzyme. The polypeptide is S-adenosylmethionine synthase (Prochlorococcus marinus (strain MIT 9215)).